Consider the following 66-residue polypeptide: Large ribosomal subunit protein bL33c (66 aa).

It belongs to the bacterial ribosomal protein bL33 family.

It is found in the plastid. Its subcellular location is the chloroplast. The protein is Large ribosomal subunit protein bL33c of Coffea arabica (Arabian coffee).